Here is a 592-residue protein sequence, read N- to C-terminus: Aspartate--tRNA(Asp/Asn) ligase (592 aa).

E173 contributes to the L-aspartate binding site. An aspartate region spans residues 197-200; that stretch reads QLFK. R219 contributes to the L-aspartate binding site. ATP is bound by residues 219 to 221 and Q228; that span reads RDE. H451 contributes to the L-aspartate binding site. E486 contributes to the ATP binding site. R493 contacts L-aspartate. Residue 538–541 coordinates ATP; sequence GLDR.

It belongs to the class-II aminoacyl-tRNA synthetase family. Type 1 subfamily. In terms of assembly, homodimer.

The protein resides in the cytoplasm. The catalysed reaction is tRNA(Asx) + L-aspartate + ATP = L-aspartyl-tRNA(Asx) + AMP + diphosphate. Functionally, aspartyl-tRNA synthetase with relaxed tRNA specificity since it is able to aspartylate not only its cognate tRNA(Asp) but also tRNA(Asn). Reaction proceeds in two steps: L-aspartate is first activated by ATP to form Asp-AMP and then transferred to the acceptor end of tRNA(Asp/Asn). This Alkalilimnicola ehrlichii (strain ATCC BAA-1101 / DSM 17681 / MLHE-1) protein is Aspartate--tRNA(Asp/Asn) ligase.